We begin with the raw amino-acid sequence, 762 residues long: Subtilisin-like protease SBT3.11 (762 aa).

A signal peptide spans 1–16; that stretch reads MMSSIVSWWFFWVISA. A propeptide spans 17–116 (activation peptide); the sequence is VCILKVEFNI…VTPNTFYELQ (100 aa). One can recognise an Inhibitor I9 domain in the interval 37–115; sequence VHIVYLGEKE…QVTPNTFYEL (79 aa). The 490-residue stretch at 120 to 609 folds into the Peptidase S8 domain; sequence TFDYLGLSHS…GGLVNPNKAA (490 aa). Asp150 serves as the catalytic Charge relay system. The N-linked (GlcNAc...) asparagine glycan is linked to Asn206. His226 acts as the Charge relay system in catalysis. Asn241 and Asn371 each carry an N-linked (GlcNAc...) asparagine glycan. The active-site Charge relay system is Ser540.

The protein belongs to the peptidase S8 family.

It localises to the secreted. This Arabidopsis thaliana (Mouse-ear cress) protein is Subtilisin-like protease SBT3.11.